The chain runs to 150 residues: Large ribosomal subunit protein bL9 (150 aa).

Belongs to the bacterial ribosomal protein bL9 family.

In terms of biological role, binds to the 23S rRNA. In Mycoplasma genitalium (strain ATCC 33530 / DSM 19775 / NCTC 10195 / G37) (Mycoplasmoides genitalium), this protein is Large ribosomal subunit protein bL9.